The sequence spans 90 residues: Probable Fe(2+)-trafficking protein (90 aa).

This sequence belongs to the Fe(2+)-trafficking protein family. In terms of assembly, monomer.

In terms of biological role, could be a mediator in iron transactions between iron acquisition and iron-requiring processes, such as synthesis and/or repair of Fe-S clusters in biosynthetic enzymes. The chain is Probable Fe(2+)-trafficking protein from Hamiltonella defensa subsp. Acyrthosiphon pisum (strain 5AT).